We begin with the raw amino-acid sequence, 154 residues long: Prefoldin subunit alpha (154 aa).

The interval 119 to 154 (EKAEVETEMEELEQQAQQMQQQQMQQMMQQQEQEDE) is disordered. Residues 132–154 (QQAQQMQQQQMQQMMQQQEQEDE) show a composition bias toward low complexity.

The protein belongs to the prefoldin subunit alpha family. Heterohexamer of two alpha and four beta subunits.

It localises to the cytoplasm. Functionally, molecular chaperone capable of stabilizing a range of proteins. Seems to fulfill an ATP-independent, HSP70-like function in archaeal de novo protein folding. The sequence is that of Prefoldin subunit alpha from Haloarcula marismortui (strain ATCC 43049 / DSM 3752 / JCM 8966 / VKM B-1809) (Halobacterium marismortui).